A 471-amino-acid polypeptide reads, in one-letter code: Argininosuccinate lyase (471 aa).

The protein belongs to the lyase 1 family. Argininosuccinate lyase subfamily.

The protein localises to the cytoplasm. The enzyme catalyses 2-(N(omega)-L-arginino)succinate = fumarate + L-arginine. It participates in amino-acid biosynthesis; L-arginine biosynthesis; L-arginine from L-ornithine and carbamoyl phosphate: step 3/3. This Paramagnetospirillum magneticum (strain ATCC 700264 / AMB-1) (Magnetospirillum magneticum) protein is Argininosuccinate lyase.